Here is a 375-residue protein sequence, read N- to C-terminus: Deoxyhypusine synthase-like protein (375 aa).

The protein belongs to the deoxyhypusine synthase family.

The protein is Deoxyhypusine synthase-like protein of Elusimicrobium minutum (strain Pei191).